Here is a 304-residue protein sequence, read N- to C-terminus: Proteasome subunit beta (304 aa).

The propeptide at 1 to 65 (MTWPHFEQLA…LTPTDAVPHG (65 aa)) is removed in mature form; by autocatalysis. Catalysis depends on Thr66, which acts as the Nucleophile.

The protein belongs to the peptidase T1B family. As to quaternary structure, the 20S proteasome core is composed of 14 alpha and 14 beta subunits that assemble into four stacked heptameric rings, resulting in a barrel-shaped structure. The two inner rings, each composed of seven catalytic beta subunits, are sandwiched by two outer rings, each composed of seven alpha subunits. The catalytic chamber with the active sites is on the inside of the barrel. Has a gated structure, the ends of the cylinder being occluded by the N-termini of the alpha-subunits. Is capped by the proteasome-associated ATPase, ARC.

Its subcellular location is the cytoplasm. It catalyses the reaction Cleavage of peptide bonds with very broad specificity.. The protein operates within protein degradation; proteasomal Pup-dependent pathway. With respect to regulation, the formation of the proteasomal ATPase ARC-20S proteasome complex, likely via the docking of the C-termini of ARC into the intersubunit pockets in the alpha-rings, may trigger opening of the gate for substrate entry. Interconversion between the open-gate and close-gate conformations leads to a dynamic regulation of the 20S proteasome proteolysis activity. Its function is as follows. Component of the proteasome core, a large protease complex with broad specificity involved in protein degradation. The protein is Proteasome subunit beta of Mycobacterium sp. (strain JLS).